The sequence spans 75 residues: MPKYYEDKEDDGRACSGLREDFKACLLQHDCVVKEGKKPSECLKEGHCRSMQVAFFECKRSMLDTRSRFRGRKGE.

The region spanning 28–66 is the CHCH domain; the sequence is QHDCVVKEGKKPSECLKEGHCRSMQVAFFECKRSMLDTR. A Cx10C motif motif is present at residues 31-42; that stretch reads CVVKEGKKPSEC. Intrachain disulfides connect C31–C58 and C42–C48. The short motif at 48-58 is the Cx9C motif element; the sequence is CRSMQVAFFEC.

Belongs to the PET191 family.

In terms of biological role, involved in an early step of the mitochondrial complex IV assembly process. The protein is Cytochrome c oxidase assembly factor 5 (coa5) of Danio rerio (Zebrafish).